We begin with the raw amino-acid sequence, 646 residues long: MIKITFPDGSVREYNEGVNGLQIAESISSRLAQDVLACGVNGEIYDLGRPINEDASVVLYKWEDEQGKHAFWHTSAHLLAEALQELYPGIQFGIGPAIENGFYYDVDPGEAVIKEADLPAIEAKMAELVAKKEAVVRRDIAKGDALKMFGDRGETYKCELISELEDGHITTYTQGDFTDLCRGPHLMTTAPIKAIKLTSVAGAYWRGHEDRKMLTRIYGITFPKKKMLDEYLALMEEAKKRDHRKIGKEMQLFMFSDTVGKGLPMWLPKGTALRLRLQDFLRRIQTRYDYQEVITPPIGNKLLYVTSGHYAKYGKDAFQPIHTPEEGEEYFLKPMNCPHHCEIYKNFPRSYKDLPLRIAEFGTVCRYEQSGELHGLTRVRSFTQDDAHIFCRPDQVKGEFLRVMDIISIVFRSMDFDNFEAQISLRDKVNREKYIGSDENWEKAEQAIIEACEEKGLKAKIEYGEAAFYGPKLDFMVKDAIGRRWQLGTIQVDYNLPERFELEYMGSDNQKHRPVMIHRAPFGSMERFVAVLIEHTAGKFPLWLTPEQVVILPISEKFNEYAEKVKTYLKMKEIRAIVDDRNEKIGRKIRDNEMKRIPYMLIVGEKEAENGEVSVRRQGEGDKGTMKFEEFGEILNEEVQNMINKW.

The TGS domain occupies 1-61 (MIKITFPDGS…NEDASVVLYK (61 aa)). A catalytic region spans residues 242–541 (DHRKIGKEMQ…LIEHTAGKFP (300 aa)). Zn(2+) is bound by residues cysteine 337, histidine 388, and histidine 518.

This sequence belongs to the class-II aminoacyl-tRNA synthetase family. As to quaternary structure, homodimer. Zn(2+) is required as a cofactor.

The protein resides in the cytoplasm. The enzyme catalyses tRNA(Thr) + L-threonine + ATP = L-threonyl-tRNA(Thr) + AMP + diphosphate + H(+). In terms of biological role, catalyzes the attachment of threonine to tRNA(Thr) in a two-step reaction: L-threonine is first activated by ATP to form Thr-AMP and then transferred to the acceptor end of tRNA(Thr). Also edits incorrectly charged L-seryl-tRNA(Thr). This is Threonine--tRNA ligase from Bacteroides fragilis (strain YCH46).